Reading from the N-terminus, the 127-residue chain is Aspartate 1-decarboxylase (127 aa).

Ser-25 serves as the catalytic Schiff-base intermediate with substrate; via pyruvic acid. Residue Ser-25 is modified to Pyruvic acid (Ser). Thr-57 is a binding site for substrate. Catalysis depends on Tyr-58, which acts as the Proton donor. 73–75 (GAA) provides a ligand contact to substrate.

This sequence belongs to the PanD family. Heterooctamer of four alpha and four beta subunits. Pyruvate is required as a cofactor. Is synthesized initially as an inactive proenzyme, which is activated by self-cleavage at a specific serine bond to produce a beta-subunit with a hydroxyl group at its C-terminus and an alpha-subunit with a pyruvoyl group at its N-terminus.

The protein localises to the cytoplasm. It carries out the reaction L-aspartate + H(+) = beta-alanine + CO2. It participates in cofactor biosynthesis; (R)-pantothenate biosynthesis; beta-alanine from L-aspartate: step 1/1. Catalyzes the pyruvoyl-dependent decarboxylation of aspartate to produce beta-alanine. This is Aspartate 1-decarboxylase from Neisseria meningitidis serogroup C / serotype 2a (strain ATCC 700532 / DSM 15464 / FAM18).